A 137-amino-acid chain; its full sequence is Protein ApaG (137 aa).

Residues 2-126 enclose the ApaG domain; it reads PKYQFQVQVQ…FVLEAFSPGQ (125 aa).

The protein is Protein ApaG of Acidovorax sp. (strain JS42).